The sequence spans 116 residues: MKKDLLELFDNSFPDRDYTIEIVNAEFTSVCPKTGLPDFGTITIRYVPDKSCIELKSLKYYFLEFRNAGIFYENITNRILDDLVTLLQPRSLSVITEWRARGGITETVSVNYSQTL.

The active-site Thioimide intermediate is the cysteine 31. The Proton donor role is filled by aspartate 38. Residues 53 to 55 and 72 to 73 each bind substrate; these read IEL and YE.

It belongs to the GTP cyclohydrolase I family. QueF type 1 subfamily.

The protein resides in the cytoplasm. The catalysed reaction is 7-aminomethyl-7-carbaguanine + 2 NADP(+) = 7-cyano-7-deazaguanine + 2 NADPH + 3 H(+). The protein operates within tRNA modification; tRNA-queuosine biosynthesis. In terms of biological role, catalyzes the NADPH-dependent reduction of 7-cyano-7-deazaguanine (preQ0) to 7-aminomethyl-7-deazaguanine (preQ1). This is NADPH-dependent 7-cyano-7-deazaguanine reductase from Pelodictyon phaeoclathratiforme (strain DSM 5477 / BU-1).